The sequence spans 804 residues: MDFSHKAIEKKWQKYWKENNVYKTTDSNHKKAYVLDMFPYPSGAGLHVGHIKGYTATDVYSRFKRMQGYDVLHPIGWDAFGLPAEQYALKTGNDPRDFTLKNIENFKAQLVKMGFSYDYDKEINTADPNYYKVTQWIFKELYKKGLAENRNIDVNWCQELGTVLANDEIIEKDGLMVSERGEYPVVKKKMRQWVLKITDYADKLLKGLDNLDWPNSVKELQRNWIGKSEGCEINFKSNDINIPVFTTRADTVFGATYIVLAPENELVLKLTTPNKLDEVKKYIELTANKSEIERKDESKTKTGVFIGSYAINPLTKEQIQIWISDYVLNDYGSGAIMAVPAHDKRDWDFATKFNLPIRFVISTKDESKAFVGEGKHINSEFLNDLDRIQSLQVIHDYIEKNNLGKKKTNYKLRDWLFSRQRFYGEPFPVLYDKDNNIILVEDDDLPITLPKTDYIKPTNTGESPLANVKNWVNVKIGDREYKRETNTMPQSAGSSWYFIAYILANSKNNLIDLTSDEAKKRLEKWLPVDLYIGGQEHAVGHLLYSRFWTHFLYDLGLLPTSEPFQRLFNQGMILGPDNRKMSKSWGNVINPDDVIDTHGADALRLYEMFMGPLDASLPWSFDGLDASLKWLNRCYRMINKIEFSNTNNHKLDYVYNDVVKKVTQMITELKFNTAISQLMVLVNAIYKEELSTVYKPYIEGFVKMLSLFSPHLAEELWEKLGNNSSVTLQAWPEFDETKIVKNTVVIALQVNGKLRSTIEVEKGTDKETLIKLAQENENIIRFIKGHKNLKYIAVVDRIVNIVIE.

The 'HIGH' region motif lies at 39-50; sequence PYPSGAGLHVGH. A 'KMSKS' region motif is present at residues 580 to 584; it reads KMSKS. Lys-583 is a binding site for ATP.

Belongs to the class-I aminoacyl-tRNA synthetase family.

It is found in the cytoplasm. The enzyme catalyses tRNA(Leu) + L-leucine + ATP = L-leucyl-tRNA(Leu) + AMP + diphosphate. In Mycoplasma capricolum subsp. capricolum (strain California kid / ATCC 27343 / NCTC 10154), this protein is Leucine--tRNA ligase.